A 611-amino-acid chain; its full sequence is Oligoendopeptidase F homolog (611 aa).

Zn(2+) is bound at residue H384. E385 is an active-site residue. Residues H388 and H391 each coordinate Zn(2+).

Belongs to the peptidase M3B family. The cofactor is Zn(2+).

The sequence is that of Oligoendopeptidase F homolog (pepF) from Mycoplasma pneumoniae (strain ATCC 29342 / M129 / Subtype 1) (Mycoplasmoides pneumoniae).